An 81-amino-acid polypeptide reads, in one-letter code: Photosystem I iron-sulfur center (81 aa).

4Fe-4S ferredoxin-type domains follow at residues 2-31 (SHSV…MIPW) and 39-68 (IASA…VRVY). The [4Fe-4S] cluster site is built by Cys11, Cys14, Cys17, Cys21, Cys48, Cys51, Cys54, and Cys58.

The eukaryotic PSI reaction center is composed of at least 11 subunits. [4Fe-4S] cluster is required as a cofactor.

The protein localises to the plastid. Its subcellular location is the chloroplast thylakoid membrane. The enzyme catalyses reduced [plastocyanin] + hnu + oxidized [2Fe-2S]-[ferredoxin] = oxidized [plastocyanin] + reduced [2Fe-2S]-[ferredoxin]. Apoprotein for the two 4Fe-4S centers FA and FB of photosystem I (PSI); essential for photochemical activity. FB is the terminal electron acceptor of PSI, donating electrons to ferredoxin. The C-terminus interacts with PsaA/B/D and helps assemble the protein into the PSI complex. Required for binding of PsaD and PsaE to PSI. PSI is a plastocyanin-ferredoxin oxidoreductase, converting photonic excitation into a charge separation, which transfers an electron from the donor P700 chlorophyll pair to the spectroscopically characterized acceptors A0, A1, FX, FA and FB in turn. The sequence is that of Photosystem I iron-sulfur center from Triticum aestivum (Wheat).